Here is a 138-residue protein sequence, read N- to C-terminus: Cysteine desulfuration protein SufE (138 aa).

The Cysteine persulfide intermediate role is filled by Cys51.

The protein belongs to the SufE family. Homodimer. Interacts with SufS.

The protein resides in the cytoplasm. It participates in cofactor biosynthesis; iron-sulfur cluster biosynthesis. Its function is as follows. Participates in cysteine desulfuration mediated by SufS. Cysteine desulfuration mobilizes sulfur from L-cysteine to yield L-alanine and constitutes an essential step in sulfur metabolism for biosynthesis of a variety of sulfur-containing biomolecules. Functions as a sulfur acceptor for SufS, by mediating the direct transfer of the sulfur atom from the S-sulfanylcysteine of SufS, an intermediate product of cysteine desulfuration process. The polypeptide is Cysteine desulfuration protein SufE (Escherichia coli O6:K15:H31 (strain 536 / UPEC)).